The following is a 144-amino-acid chain: Large ribosomal subunit protein uL15 (144 aa).

Basic and acidic residues predominate over residues 1–14; that stretch reads MKLHELKPNEGARD. The segment at 1 to 43 is disordered; the sequence is MKLHELKPNEGARDVRKRVGRGTSSGTGKTAGRGQKGQKARSK. The segment covering 23-35 has biased composition (gly residues); sequence TSSGTGKTAGRGQ.

Belongs to the universal ribosomal protein uL15 family. As to quaternary structure, part of the 50S ribosomal subunit.

Functionally, binds to the 23S rRNA. This chain is Large ribosomal subunit protein uL15, found in Latilactobacillus sakei subsp. sakei (strain 23K) (Lactobacillus sakei subsp. sakei).